The chain runs to 120 residues: MDYEFLRDVTGRVLVRMSMGHEVVGHWFNEEVKDNLSLLDEVEQAARTVKGSERSWQRAGHEYTIWMDGEEVMIRANQLDFSGDEMEEGMSYYDEESLSLCGMEDFLRVVAAYREFVSKA.

Belongs to the UPF0231 family.

This Salmonella typhi protein is UPF0231 protein YacL.